The chain runs to 125 residues: MSKPKAPRRVGDKEALSVGTQIRGSAQKLNLVAGLIRGKRAEDAMNILAFSKKAMAVDARKVLASAIANAENNHNLDVDALVVAEASVGKSITMKRFHTRGRGKSTRILKPFSRLRIVVREVEEA.

The protein belongs to the universal ribosomal protein uL22 family. As to quaternary structure, part of the 50S ribosomal subunit.

This protein binds specifically to 23S rRNA; its binding is stimulated by other ribosomal proteins, e.g. L4, L17, and L20. It is important during the early stages of 50S assembly. It makes multiple contacts with different domains of the 23S rRNA in the assembled 50S subunit and ribosome. Functionally, the globular domain of the protein is located near the polypeptide exit tunnel on the outside of the subunit, while an extended beta-hairpin is found that lines the wall of the exit tunnel in the center of the 70S ribosome. The chain is Large ribosomal subunit protein uL22 from Novosphingobium aromaticivorans (strain ATCC 700278 / DSM 12444 / CCUG 56034 / CIP 105152 / NBRC 16084 / F199).